A 461-amino-acid chain; its full sequence is Decaprenylphosphoryl-beta-D-ribose oxidase (461 aa).

The FAD-binding PCMH-type domain occupies threonine 19–threonine 194. FAD contacts are provided by residues alanine 53–asparagine 63, glycine 117, threonine 122–glycine 125, cysteine 129–histidine 132, isoleucine 184, and tyrosine 415.

Belongs to the DprE1 family. In terms of assembly, monomer. Although forming apparent dimer in crystals, DprE1 does not dimerize appreciably in solution. Interacts with DprE2 to form an epimerase complex.

It is found in the periplasm. It carries out the reaction trans,octa-cis-decaprenylphospho-beta-D-ribofuranose + FAD + H(+) = trans,octa-cis-decaprenylphospho-beta-D-erythro-pentofuranosid-2-ulose + FADH2. It functions in the pathway cell wall biogenesis; cell wall polysaccharide biosynthesis. With respect to regulation, is inhibited by 8-nitro-benzothiazinones (BTZs) such as BTZ043 and PBTZ169; BTZs are a new class of antimycobacterial agents that kill M.tuberculosis in vitro, ex vivo, and in mouse models of tuberculosis. Is also inhibited by dinitrobenzamide derivatives (DNBs), which thus block formation of both cell-wall lipoarabinomannan and arabinogalactan via inhibition of decaprenyl-phospho-arabinose (DPA) synthesis; DNBs show high activity against intracellular growth of M.tuberculosis inside macrophages, including extensively drug resistant (XDR) strains. BTZs and DNBs are suicide inhibitors that act via covalent modification of DprE1; the essential nitro group of these compounds is reduced by DprE1 to a nitroso group, which then specifically reacts with Cys-387 of DprE1 to form an irreversible semimercaptal adduct. Many other compounds with diverse scaffolds were found to act as either covalent (e.g. nitroquinoxalines, nitroimidazoles) or non-covalent (e.g. the benzothiazole derivative TCA1, the 2-carboxyquinoxaline Ty38C, 8-pyrrole-benzothiazinones, 1,4-azaindoles, pyrazolopyridones, 4-aminoquinolone piperidine amides) DprE1 inhibitors. Its function is as follows. Component of the DprE1-DprE2 complex that catalyzes the 2-step epimerization of decaprenyl-phospho-ribose (DPR) to decaprenyl-phospho-arabinose (DPA), a key precursor that serves as the arabinose donor required for the synthesis of cell-wall arabinans. DprE1 catalyzes the first step of epimerization, namely FAD-dependent oxidation of the C2' hydroxyl of DPR to yield the keto intermediate decaprenyl-phospho-2'-keto-D-arabinose (DPX). The intermediate DPX is then transferred to DprE2 subunit of the epimerase complex, most probably through a 'substrate channel' at the interface of DprE1-DprE2 complex. Can also use farnesyl-phosphoryl-beta-D-ribofuranose (FPR) as substrate in vitro. Functionally, dprE1 is a highly vulnerable and fully validated tuberculosis drug target. The chain is Decaprenylphosphoryl-beta-D-ribose oxidase from Mycobacterium tuberculosis (strain CDC 1551 / Oshkosh).